The following is a 367-amino-acid chain: Alginate lyase (367 aa).

The first 27 residues, 1–27 (MKTSHLIRITLPGALAAALLASQVSQA), serve as a signal peptide directing secretion. Residues 65–66 (SK), 138–139 (HT), and tyrosine 256 each bind substrate.

This sequence belongs to the polysaccharide lyase 5 family.

The protein localises to the periplasm. It carries out the reaction Eliminative cleavage of alginate to give oligosaccharides with 4-deoxy-alpha-L-erythro-hex-4-enuronosyl groups at their non-reducing ends and beta-D-mannuronate at their reducing end.. In terms of biological role, catalyzes the depolymerization of alginate by cleaving the beta-1,4 glycosidic bond between two adjacent sugar residues via a beta-elimination mechanism. May serve to degrade mislocalized alginate that is trapped in the periplasmic space. In Pseudomonas paraeruginosa (strain DSM 24068 / PA7) (Pseudomonas aeruginosa (strain PA7)), this protein is Alginate lyase.